We begin with the raw amino-acid sequence, 160 residues long: MARYENILELEPNLNGEDLSIGIVMSRFNIEASEGLLGACVEELMKQGVDAGNVVLVSVPGALEIPLALQKMALTDQFDALIALGAVIRGETYHFEIVSEQSTNGVSTVQLDTGIPIANGILTTNTDDQALARMSQKGAEAARVAIEMANLQRTLDEMEQ.

5-amino-6-(D-ribitylamino)uracil-binding positions include Phe28, 62–64 (ALE), and 86–88 (AVI). Residue 91 to 92 (ET) participates in (2S)-2-hydroxy-3-oxobutyl phosphate binding. His94 functions as the Proton donor in the catalytic mechanism. Asn119 is a 5-amino-6-(D-ribitylamino)uracil binding site. Arg133 contributes to the (2S)-2-hydroxy-3-oxobutyl phosphate binding site.

It belongs to the DMRL synthase family.

It carries out the reaction (2S)-2-hydroxy-3-oxobutyl phosphate + 5-amino-6-(D-ribitylamino)uracil = 6,7-dimethyl-8-(1-D-ribityl)lumazine + phosphate + 2 H2O + H(+). It functions in the pathway cofactor biosynthesis; riboflavin biosynthesis; riboflavin from 2-hydroxy-3-oxobutyl phosphate and 5-amino-6-(D-ribitylamino)uracil: step 1/2. In terms of biological role, catalyzes the formation of 6,7-dimethyl-8-ribityllumazine by condensation of 5-amino-6-(D-ribitylamino)uracil with 3,4-dihydroxy-2-butanone 4-phosphate. This is the penultimate step in the biosynthesis of riboflavin. The protein is 6,7-dimethyl-8-ribityllumazine synthase of Nitrosospira multiformis (strain ATCC 25196 / NCIMB 11849 / C 71).